The following is a 1482-amino-acid chain: Calcium-dependent protein kinase 6 (1482 aa).

Disordered stretches follow at residues Thr-250–Asn-320 and Ser-739–Asn-760. Residues Ala-254–Tyr-264 are compositionally biased toward polar residues. Residues Glu-277–Asp-301 show a composition bias toward acidic residues. Positions Tyr-302–Arg-318 are enriched in polar residues. Residues Ser-739–Asp-748 show a composition bias toward low complexity. Residues Asn-749–Asn-760 show a composition bias toward basic and acidic residues. EF-hand domains are found at residues Ile-931 to Asn-966 and Val-972 to Gln-1007. Positions 985, 987, 989, 991, and 996 each coordinate Ca(2+). The Protein kinase domain maps to Leu-1043 to Phe-1295. Residues Leu-1049 to Val-1057 and Lys-1072 each bind ATP. The active-site Proton acceptor is the Asp-1162. EF-hand domains lie at Asn-1338 to Lys-1373, Asp-1376 to Asn-1406, Ile-1407 to Asn-1442, and Lys-1468 to Phe-1482. Ca(2+)-binding residues include Asp-1351, Asn-1353, Asn-1355, Ser-1357, and Glu-1362. The Ca(2+) site is built by Asp-1420, Asp-1422, Asp-1424, Tyr-1426, and Asp-1431.

It belongs to the protein kinase superfamily. Ser/Thr protein kinase family. CDPK subfamily. It depends on Mg(2+) as a cofactor.

It carries out the reaction L-seryl-[protein] + ATP = O-phospho-L-seryl-[protein] + ADP + H(+). The enzyme catalyses L-threonyl-[protein] + ATP = O-phospho-L-threonyl-[protein] + ADP + H(+). With respect to regulation, activated by calcium. In terms of biological role, calcium-dependent protein kinase which acts as a sensor and effector of intracellular Ca(2+) levels. In sporozoites, probably involved in the secretion of the cysteine protease that cleaves circumsporozoite protein CSP, thereby exposing CSP TSR domain, which binds with high affinity to highly sulfated heparan sulfate proteoglycans (HSPGs), resulting in productive invasion of the host hepatocytes. The chain is Calcium-dependent protein kinase 6 from Plasmodium berghei (strain Anka).